The chain runs to 137 residues: Protein PsiE homolog (137 aa).

The next 4 membrane-spanning stretches (helical) occupy residues 15 to 35 (LRITLNLALIMVGFTLVAFLI), 55 to 75 (YYMTQDILTFFLYFEFIALIV), 82 to 102 (FHFPLRYFIYIGITAIIRFII), and 108 to 128 (ATSTLILSGAILLLVAALFLA).

Belongs to the PsiE family.

The protein localises to the cell membrane. The polypeptide is Protein PsiE homolog (Listeria innocua serovar 6a (strain ATCC BAA-680 / CLIP 11262)).